Reading from the N-terminus, the 293-residue chain is Ribosomal protein L11 methyltransferase (293 aa).

S-adenosyl-L-methionine-binding residues include T145, G166, D188, and N230.

The protein belongs to the methyltransferase superfamily. PrmA family.

The protein resides in the cytoplasm. The enzyme catalyses L-lysyl-[protein] + 3 S-adenosyl-L-methionine = N(6),N(6),N(6)-trimethyl-L-lysyl-[protein] + 3 S-adenosyl-L-homocysteine + 3 H(+). In terms of biological role, methylates ribosomal protein L11. In Actinobacillus pleuropneumoniae serotype 5b (strain L20), this protein is Ribosomal protein L11 methyltransferase.